A 969-amino-acid chain; its full sequence is Glycine dehydrogenase (decarboxylating) (969 aa).

Lys-716 bears the N6-(pyridoxal phosphate)lysine mark.

This sequence belongs to the GcvP family. As to quaternary structure, the glycine cleavage system is composed of four proteins: P, T, L and H. Pyridoxal 5'-phosphate serves as cofactor.

The enzyme catalyses N(6)-[(R)-lipoyl]-L-lysyl-[glycine-cleavage complex H protein] + glycine + H(+) = N(6)-[(R)-S(8)-aminomethyldihydrolipoyl]-L-lysyl-[glycine-cleavage complex H protein] + CO2. Its function is as follows. The glycine cleavage system catalyzes the degradation of glycine. The P protein binds the alpha-amino group of glycine through its pyridoxal phosphate cofactor; CO(2) is released and the remaining methylamine moiety is then transferred to the lipoamide cofactor of the H protein. This Shewanella woodyi (strain ATCC 51908 / MS32) protein is Glycine dehydrogenase (decarboxylating).